Here is a 286-residue protein sequence, read N- to C-terminus: Polyamine aminopropyltransferase (286 aa).

A PABS domain is found at 9–242 (NGWIDEHHQG…GWWSWTFAAI (234 aa)). Q36 serves as a coordination point for S-methyl-5'-thioadenosine. Residues H67 and D91 each coordinate spermidine. S-methyl-5'-thioadenosine-binding positions include E111 and 143–144 (NG). D162 functions as the Proton acceptor in the catalytic mechanism. An S-methyl-5'-thioadenosine-binding site is contributed by P169.

Belongs to the spermidine/spermine synthase family. Homodimer or homotetramer.

The protein localises to the cytoplasm. The enzyme catalyses S-adenosyl 3-(methylsulfanyl)propylamine + putrescine = S-methyl-5'-thioadenosine + spermidine + H(+). Its pathway is amine and polyamine biosynthesis; spermidine biosynthesis; spermidine from putrescine: step 1/1. In terms of biological role, catalyzes the irreversible transfer of a propylamine group from the amino donor S-adenosylmethioninamine (decarboxy-AdoMet) to putrescine (1,4-diaminobutane) to yield spermidine. This chain is Polyamine aminopropyltransferase, found in Prochlorococcus marinus (strain MIT 9313).